The sequence spans 456 residues: Probable hexose phosphate transport protein (456 aa).

Helical transmembrane passes span 34–54 (IFYS…SFTF), 70–90 (LGII…VSGV), 113–133 (IFFG…INGW), 161–181 (VWST…GVAI), 185–205 (GWRG…FILI), 257–277 (YVLS…IYVV), 302–322 (LCVS…GWLS), 331–351 (GPMN…LWGT), 363–383 (FLFI…LAAA), 394–414 (ASGF…YPLG), and 421–441 (GWHG…ILFL).

This sequence belongs to the major facilitator superfamily. Organophosphate:Pi antiporter (OPA) (TC 2.A.1.4) family.

Its subcellular location is the cell membrane. Transport protein for sugar phosphate uptake. The sequence is that of Probable hexose phosphate transport protein from Chlamydia trachomatis serovar D (strain ATCC VR-885 / DSM 19411 / UW-3/Cx).